Here is a 985-residue protein sequence, read N- to C-terminus: Ankyrin repeat domain-containing protein 24 (985 aa).

ANK repeat units follow at residues 52-81 (EGKS…DVMS), 85-114 (AGYN…VVDI), 118-147 (SGWT…HMNP), 151-180 (SGAT…ATND), and 184-213 (QGRT…QLSI). Disordered stretches follow at residues 243–293 (RSSP…DRDA), 311–360 (IRGL…LGRE), 386–412 (QDEE…SAEE), 476–503 (YTEA…TAYQ), and 594–614 (DNAE…NPGM). Residues 291 to 488 (RDAYEEIVRL…AMHSQQQQQE (198 aa)) are a coiled coil. Basic and acidic residues-rich tracts occupy residues 311–326 (IRGL…KEPL) and 349–360 (EKQEEKESLGRE).

As to quaternary structure, homodimer. Interacts (via C-terminal domain) with TRIOBP (via C-terminal domain) isoform 4; recruits TRIOBP isoform 4 to stereocilia rootlets. As to expression, expressed in vestibular hair bundles.

Its subcellular location is the cell membrane. The protein localises to the cell projection. The protein resides in the stereocilium. Its function is as follows. Component of the stereocilia rootlet in hair cells of inner ear. Bridges the apical plasma membrane with the lower rootlet and maintains normal distribution of TRIOBP, thereby reinforcing stereocilia insertion points and organizing rootlets for hearing with long-term resilience. In Mus musculus (Mouse), this protein is Ankyrin repeat domain-containing protein 24 (Ankrd24).